Reading from the N-terminus, the 529-residue chain is Basal body-orientation factor 1 (529 aa).

Positions 1-13 (MPSKGKDKKKGKS) are enriched in basic residues. The disordered stretch occupies residues 1 to 22 (MPSKGKDKKKGKSKGKDTKKLI). Coiled-coil stretches lie at residues 85-201 (LKKQ…EAEK) and 271-361 (VKEK…EVER).

Belongs to the BBOF1 family. Interacts with MNS1 and ODF2.

Its subcellular location is the cytoplasm. It is found in the cytoskeleton. The protein resides in the cilium basal body. The protein localises to the flagellum axoneme. Its function is as follows. Plays an essential role in sperm motility and male fertility by stabilizing the sperm flagellar axonemal structure. May be required for the stability of ODF2 and MANS1 proteins. Dispensable for the assembly and function of motile cilia. The protein is Basal body-orientation factor 1 of Homo sapiens (Human).